Here is an 87-residue protein sequence, read N- to C-terminus: Cell division topological specificity factor (87 aa).

This sequence belongs to the MinE family.

Its function is as follows. Prevents the cell division inhibition by proteins MinC and MinD at internal division sites while permitting inhibition at polar sites. This ensures cell division at the proper site by restricting the formation of a division septum at the midpoint of the long axis of the cell. This chain is Cell division topological specificity factor, found in Clostridium botulinum (strain ATCC 19397 / Type A).